The following is a 113-amino-acid chain: U11-theraphotoxin-Hhn1a (113 aa).

An N-terminal signal peptide occupies residues 1 to 21 (MNTVRVTFLLVFVLAVSLGQA). Positions 22-74 (DKDENRMEMQEKTEQGKSYLDFAENLLLQKLEELEAKPLEEDSEESRNSRQKR) are excised as a propeptide. The span at 57–69 (AKPLEEDSEESRN) shows a compositional bias: basic and acidic residues. A disordered region spans residues 57–83 (AKPLEEDSEESRNSRQKRCIGEGVPCD). Intrachain disulfides connect Cys-75–Cys-90, Cys-82–Cys-95, and Cys-89–Cys-110.

Belongs to the neurotoxin 14 (magi-1) family. 01 (HNTX-16) subfamily. As to expression, expressed by the venom gland.

The protein localises to the secreted. Probable ion channel inhibitor. This Cyriopagopus hainanus (Chinese bird spider) protein is U11-theraphotoxin-Hhn1a.